The following is a 456-amino-acid chain: RuvB-like helicase 1 (456 aa).

Residue 70–77 (GPPGTGKT) participates in ATP binding.

This sequence belongs to the RuvB family. As to quaternary structure, forms homohexameric rings. May form a dodecamer with rept made of two stacked hexameric rings. Component of the chromatin remodeling Ino80 complex.

It is found in the nucleus. The catalysed reaction is ATP + H2O = ADP + phosphate + H(+). Functionally, acts as a transcriptional coactivator in Wg signaling. In terms of biological role, proposed core component of the chromatin remodeling Ino80 complex which is involved in transcriptional regulation, DNA replication and probably DNA repair. This Aedes aegypti (Yellowfever mosquito) protein is RuvB-like helicase 1.